The sequence spans 208 residues: Riboflavin synthase (208 aa).

2 Lumazine-binding repeats span residues 1 to 97 (MFTG…MGGH) and 98 to 195 (IISG…VDTT). Residues 4 to 6 (GIV), 48 to 50 (CLT), 62 to 67 (DIMKIT), 101 to 103 (GHI), lysine 137, 146 to 148 (SLT), and 160 to 165 (SIIPET) each bind 2,4-dihydroxypteridine.

In terms of assembly, homotrimer.

The enzyme catalyses 2 6,7-dimethyl-8-(1-D-ribityl)lumazine + H(+) = 5-amino-6-(D-ribitylamino)uracil + riboflavin. It functions in the pathway cofactor biosynthesis; riboflavin biosynthesis; riboflavin from 2-hydroxy-3-oxobutyl phosphate and 5-amino-6-(D-ribitylamino)uracil: step 2/2. In terms of biological role, catalyzes the dismutation of two molecules of 6,7-dimethyl-8-ribityllumazine, resulting in the formation of riboflavin and 5-amino-6-(D-ribitylamino)uracil. This is Riboflavin synthase (ribE) from Buchnera aphidicola subsp. Schizaphis graminum (strain Sg).